The primary structure comprises 674 residues: Probable L-type lectin-domain containing receptor kinase I.5 (674 aa).

The signal sequence occupies residues 1–22 (MSKGLFLIWLISSFHLISFSTS). Residues 23–286 (SKDTSFVFNG…RPRAEHKKVQ (264 aa)) are Extracellular-facing. The legume-lectin like stretch occupies residues 25–258 (DTSFVFNGFG…YHYLLGWSFS (234 aa)). Residues Asn-124, Asn-181, Asn-185, Asn-204, and Asn-225 are each glycosylated (N-linked (GlcNAc...) asparagine). A helical transmembrane segment spans residues 287–307 (FALIIALPVILAIVVMAVLAG). Topologically, residues 308–674 (VYYHRKKKYA…DHEQPLEFKS (367 aa)) are cytoplasmic. The Protein kinase domain maps to 344-625 (FHKDRFLGRG…LPLPDFSPYT (282 aa)). ATP is bound by residues 350-358 (LGRGGFGEV) and Lys-372. The Proton acceptor role is filled by Asp-468. Over residues 649–662 (NWSAPSASSSSANN) the composition is skewed to low complexity. The segment at 649–674 (NWSAPSASSSSANNSKDHEQPLEFKS) is disordered. The span at 663–674 (SKDHEQPLEFKS) shows a compositional bias: basic and acidic residues.

The protein in the C-terminal section; belongs to the protein kinase superfamily. Ser/Thr protein kinase family. In the N-terminal section; belongs to the leguminous lectin family.

The protein localises to the cell membrane. The catalysed reaction is L-seryl-[protein] + ATP = O-phospho-L-seryl-[protein] + ADP + H(+). The enzyme catalyses L-threonyl-[protein] + ATP = O-phospho-L-threonyl-[protein] + ADP + H(+). This is Probable L-type lectin-domain containing receptor kinase I.5 (LECRK15) from Arabidopsis thaliana (Mouse-ear cress).